We begin with the raw amino-acid sequence, 157 residues long: Transcription elongation factor GreB (157 aa).

The protein belongs to the GreA/GreB family. GreB subfamily.

Its function is as follows. Necessary for efficient RNA polymerase transcription elongation past template-encoded arresting sites. The arresting sites in DNA have the property of trapping a certain fraction of elongating RNA polymerases that pass through, resulting in locked ternary complexes. Cleavage of the nascent transcript by cleavage factors such as GreA or GreB allows the resumption of elongation from the new 3'terminus. GreB releases sequences of up to 9 nucleotides in length. The sequence is that of Transcription elongation factor GreB from Salmonella typhimurium (strain LT2 / SGSC1412 / ATCC 700720).